We begin with the raw amino-acid sequence, 327 residues long: ATP-dependent 6-phosphofructokinase (327 aa).

Residues glycine 12, 73-74, and 103-106 contribute to the ATP site; these read RL and GDGS. Aspartate 104 provides a ligand contact to Mg(2+). 126-128 provides a ligand contact to substrate; the sequence is TID. Aspartate 128 functions as the Proton acceptor in the catalytic mechanism. ADP is bound at residue arginine 155. Substrate is bound by residues arginine 163 and 170-172; that span reads MGH. ADP-binding positions include 186–188 and 214–216; these read GAD and KRS. Substrate contacts are provided by residues glutamate 223, arginine 245, and 251–254; that span reads HTQR.

Belongs to the phosphofructokinase type A (PFKA) family. ATP-dependent PFK group I subfamily. Prokaryotic clade 'B1' sub-subfamily. As to quaternary structure, homotetramer. Requires Mg(2+) as cofactor.

It is found in the cytoplasm. It carries out the reaction beta-D-fructose 6-phosphate + ATP = beta-D-fructose 1,6-bisphosphate + ADP + H(+). It functions in the pathway carbohydrate degradation; glycolysis; D-glyceraldehyde 3-phosphate and glycerone phosphate from D-glucose: step 3/4. Its activity is regulated as follows. Allosterically activated by ADP and other diphosphonucleosides, and allosterically inhibited by phosphoenolpyruvate. Catalyzes the phosphorylation of D-fructose 6-phosphate to fructose 1,6-bisphosphate by ATP, the first committing step of glycolysis. The sequence is that of ATP-dependent 6-phosphofructokinase from Spiroplasma citri.